The sequence spans 115 residues: DNA-binding protein PYRAB09250 (115 aa).

Belongs to the PDCD5 family.

The protein is DNA-binding protein PYRAB09250 of Pyrococcus abyssi (strain GE5 / Orsay).